Reading from the N-terminus, the 887-residue chain is 3-hydroxy-3-methylglutaryl-coenzyme A reductase (887 aa).

Over 1 to 9 (MLSRLFRMH) the chain is Cytoplasmic. Residues 10–39 (GLFVASHPWEVIVGTVTLTICMMSMNMFTG) form a helical membrane-spanning segment. The Lumenal segment spans residues 40-56 (NNKICGWNYECPKFEED). A helical membrane pass occupies residues 57-78 (VLSSDIIILTITRCIAILYIYF). An SSD domain is found at 61 to 218 (DIIILTITRC…MTFFPACVSL (158 aa)). Positions 75 to 78 (YIYF) match the INSIG-binding motif motif. Residues 79–89 (QFQNLRQLGSK) are Cytoplasmic-facing. Residue Lys89 forms a Glycyl lysine isopeptide (Lys-Gly) (interchain with G-Cter in ubiquitin) linkage. A helical membrane pass occupies residues 90 to 114 (YILGIAGLFTIFSSFVFSTVVIHFL). Residues 115-123 (DKELTGLNE) are Lumenal-facing. The chain crosses the membrane as a helical span at residues 124-149 (ALPFFLLLIDLSRASALAKFALSSNS). Residues 150–159 (QDEVRENIAR) lie on the Cytoplasmic side of the membrane. A helical transmembrane segment spans residues 160–187 (GMAILGPTFTLDALVECLVIGVGTMSGV). At 188 to 191 (RQLE) the chain is on the lumenal side. The helical transmembrane segment at 192-220 (IMCCFGCMSVLANYFVFMTFFPACVSLVL) threads the bilayer. Topologically, residues 221-248 (ELSRESREGRPIWQLSHFARVLEEEENK) are cytoplasmic. A Glycyl lysine isopeptide (Lys-Gly) (interchain with G-Cter in ubiquitin) cross-link involves residue Lys248. A helical transmembrane segment spans residues 249 to 275 (PNPVTQRVKMIMSLGLVLVHAHSRWIA). Residues 276-314 (DPSPQNSTTEHSKVSLGLDEDVSKRIEPSVSLWQFYLSK) lie on the Lumenal side of the membrane. The N-linked (GlcNAc...) asparagine glycan is linked to Asn281. Residues 315-339 (MISMDIEQVVTLSLAFLLAVKYIFF) form a helical membrane-spanning segment. Residues 340 to 887 (EQAETESTLS…LQGTCTKKAA (548 aa)) lie on the Cytoplasmic side of the membrane. Catalysis depends on charge relay system residues Glu558, Lys690, and Asp766. His865 serves as the catalytic Proton donor. Ser871 is modified (phosphoserine; by AMPK).

It belongs to the HMG-CoA reductase family. As to quaternary structure, homotetramer. Homodimer. Interacts (via its SSD) with INSIG1; the interaction, accelerated by sterols, leads to the recruitment of HMGCR to AMFR/gp78 for its ubiquitination by the sterol-mediated ERAD pathway. Interacts with UBIAD1. Undergoes sterol-mediated ubiquitination and ER-associated degradation (ERAD). Accumulation of sterols in the endoplasmic reticulum (ER) membrane, triggers binding of the reductase to the ER membrane protein INSIG1 or INSIG2. The INSIG1 binding leads to the recruitment of the ubiquitin ligase, AMFR/gp78, RNF139 or RNF145, initiating ubiquitination of the reductase. The ubiquitinated reductase is then extracted from the ER membrane and delivered to cytosolic 26S proteosomes by a mechanism probably mediated by the ATPase Valosin-containing protein VCP/p97. The INSIG2-binding leads to the recruitment of the ubiquitin ligase RNF139, initiating ubiquitination of the reductase. Lys-248 is the main site of ubiquitination. Ubiquitination is enhanced by the presence of a geranylgeranylated protein. Post-translationally, N-glycosylated. Deglycosylated by NGLY1 on release from the endoplasmic reticulum (ER) in a sterol-mediated manner. In terms of processing, phosphorylated. Phosphorylation at Ser-871 reduces the catalytic activity.

It is found in the endoplasmic reticulum membrane. The protein localises to the peroxisome membrane. The enzyme catalyses (R)-mevalonate + 2 NADP(+) + CoA = (3S)-3-hydroxy-3-methylglutaryl-CoA + 2 NADPH + 2 H(+). The protein operates within metabolic intermediate biosynthesis; (R)-mevalonate biosynthesis; (R)-mevalonate from acetyl-CoA: step 3/3. Regulated by a negative feedback mechanism through sterols and non-sterol metabolites derived from mevalonate. Phosphorylation at Ser-871 down-regulates the catalytic activity. Functionally, catalyzes the conversion of (3S)-hydroxy-3-methylglutaryl-CoA (HMG-CoA) to mevalonic acid, the rate-limiting step in the synthesis of cholesterol and other isoprenoids, thus plays a critical role in cellular cholesterol homeostasis. The protein is 3-hydroxy-3-methylglutaryl-coenzyme A reductase (HMGCR) of Mesocricetus auratus (Golden hamster).